The primary structure comprises 93 residues: Small ribosomal subunit protein uS19 (93 aa).

It belongs to the universal ribosomal protein uS19 family.

Protein S19 forms a complex with S13 that binds strongly to the 16S ribosomal RNA. This Kocuria rhizophila (strain ATCC 9341 / DSM 348 / NBRC 103217 / DC2201) protein is Small ribosomal subunit protein uS19.